A 257-amino-acid polypeptide reads, in one-letter code: MASNNDSIKKTLFVVIALSLVCSIIVSAAAVGLRDKQKENAALDKQSKILQVAGIEAKGSKQIVELFNKSIEPRLVDFNTGDFVEGDAANYDQRKAAKEASESIKLTAEQDKAKIQRRANVGVVYLVKDGDKTSKVILPVHGNGLWSMMYAFVAVETDGNTVSGLTYYEQGETPGLGGEVENPAWRAQWVGKKLFDENHKPAIKIVKGGAPQGSEHGVDGLSGATLTSNGVQNTFDFWLGDMGFGPFLTKVRDGGLN.

The chain crosses the membrane as a helical span at residues 12–32 (LFVVIALSLVCSIIVSAAAVG). Thr-225 carries the FMN phosphoryl threonine modification.

The protein belongs to the NqrC family. As to quaternary structure, composed of six subunits; NqrA, NqrB, NqrC, NqrD, NqrE and NqrF. FMN serves as cofactor.

Its subcellular location is the cell inner membrane. It carries out the reaction a ubiquinone + n Na(+)(in) + NADH + H(+) = a ubiquinol + n Na(+)(out) + NAD(+). Its function is as follows. NQR complex catalyzes the reduction of ubiquinone-1 to ubiquinol by two successive reactions, coupled with the transport of Na(+) ions from the cytoplasm to the periplasm. NqrA to NqrE are probably involved in the second step, the conversion of ubisemiquinone to ubiquinol. The polypeptide is Na(+)-translocating NADH-quinone reductase subunit C (Vibrio cholerae serotype O1 (strain ATCC 39541 / Classical Ogawa 395 / O395)).